The primary structure comprises 217 residues: UPF0111 protein MTH_1689 (217 aa).

The protein belongs to the UPF0111 family.

The protein is UPF0111 protein MTH_1689 of Methanothermobacter thermautotrophicus (strain ATCC 29096 / DSM 1053 / JCM 10044 / NBRC 100330 / Delta H) (Methanobacterium thermoautotrophicum).